Reading from the N-terminus, the 145-residue chain is Lysozyme-like protein 4 (145 aa).

The N-terminal stretch at 1 to 19 (MQLYLVLLLISYLLTPIGA) is a signal peptide. Residues 20–145 (SILGRCTVAK…LDRWLDGCDL (126 aa)) form the C-type lysozyme domain. Cystine bridges form between Cys-25-Cys-143, Cys-49-Cys-130, Cys-84-Cys-95, and Cys-91-Cys-109. Residue Glu-54 is part of the active site.

This sequence belongs to the glycosyl hydrolase 22 family. Monomer. In terms of tissue distribution, expressed strongly in testis and in epididymis, and weakly in brain and lung. Detected in sperm (at protein level).

It is found in the secreted. Its subcellular location is the cytoplasmic vesicle. It localises to the secretory vesicle. The protein resides in the acrosome. The protein localises to the cell projection. It is found in the cilium. Its subcellular location is the flagellum. Its function is as follows. May be involved in fertilization. Has no detectable bacteriolytic in vitro. Has no lysozyme activity in vitro. The polypeptide is Lysozyme-like protein 4 (Lyzl4) (Mus musculus (Mouse)).